Here is a 277-residue protein sequence, read N- to C-terminus: Putative thiosulfate sulfurtransferase (277 aa).

Rhodanese domains follow at residues 18 to 125 (HAPK…PLSS) and 154 to 274 (AINV…APIE). The active-site Cysteine persulfide intermediate is cysteine 233. Arginine 238 contributes to the substrate binding site.

The catalysed reaction is thiosulfate + hydrogen cyanide = thiocyanate + sulfite + 2 H(+). May be a sulfotransferase involved in the formation of thiosulfate. This chain is Putative thiosulfate sulfurtransferase (cysA1), found in Mycobacterium tuberculosis (strain CDC 1551 / Oshkosh).